Consider the following 343-residue polypeptide: Tetraacyldisaccharide 4'-kinase (343 aa).

ATP is bound at residue 55-62 (TVGGEGKT).

Belongs to the LpxK family.

The enzyme catalyses a lipid A disaccharide + ATP = a lipid IVA + ADP + H(+). The protein operates within glycolipid biosynthesis; lipid IV(A) biosynthesis; lipid IV(A) from (3R)-3-hydroxytetradecanoyl-[acyl-carrier-protein] and UDP-N-acetyl-alpha-D-glucosamine: step 6/6. Functionally, transfers the gamma-phosphate of ATP to the 4'-position of a tetraacyldisaccharide 1-phosphate intermediate (termed DS-1-P) to form tetraacyldisaccharide 1,4'-bis-phosphate (lipid IVA). The chain is Tetraacyldisaccharide 4'-kinase from Chelativorans sp. (strain BNC1).